The chain runs to 678 residues: Probable metal-nicotianamine transporter YSL6 (678 aa).

Transmembrane regions (helical) follow at residues 41–61 (VTVR…LITH), 65–85 (LTVG…YFLV), 113–133 (CVVA…MLAM), 158–178 (LGWM…SLVA), 226–246 (ISFF…SCGF), 279–299 (IVNC…WPYI), 324–344 (VFIS…KIIY), 394–414 (LAGS…PMIF), 419–439 (WYLV…NSYG), 467–487 (GGVI…STAA), 512–532 (IGTT…WTAF), 561–581 (SALP…AILI), 606–626 (FYIG…LFVW), and 641–661 (IASG…ILSI).

This sequence belongs to the YSL (TC 2.A.67.2) family. Expressed in roots and leaves.

It localises to the membrane. May be involved in the transport of nicotianamine-chelated metals. The protein is Probable metal-nicotianamine transporter YSL6 (YSL6) of Oryza sativa subsp. japonica (Rice).